A 325-amino-acid polypeptide reads, in one-letter code: WUSCHEL-related homeobox 8 (325 aa).

The homeobox; WUS-type DNA-binding region spans 51 to 115 (DPKPRWNPKP…NRKSRAKHKL (65 aa)).

Belongs to the WUS homeobox family. Expressed only in the egg cell. Not detected in the pollen tube. Expressed in the zygote, the basal cell, and later the suspensor. Expressed in all suspensor cells, except the hypophysis, and in the embryo surrounding region (ESR) endosperm cells. Strongly expressed in the suspensor cells, with a weak expression also detected throughout the developing embryo.

The protein resides in the nucleus. Probable transcription factor, which may be involved in embryonic patterning. May be required for basal embryo development after fertilization. Acts partially redundantly with STIP in promoting embryonic cell division and proliferation. Promotes cotyledon boundary formation by maintaining the symmetry in CUC genes expression domains. The chain is WUSCHEL-related homeobox 8 from Arabidopsis thaliana (Mouse-ear cress).